The chain runs to 619 residues: Laccase (619 aa).

The first 21 residues, Met-1–Gly-21, serve as a signal peptide directing secretion. Positions Ala-22–Gly-49 are excised as a propeptide. Residues Cys-55 and Cys-63 are joined by a disulfide bond. Plastocyanin-like domains are found at residues Thr-84–Asn-207 and Val-216–Asn-373. Asn-139 carries N-linked (GlcNAc...) asparagine glycosylation. Cu cation is bound by residues His-144, His-146, His-189, and His-191. 2 cysteine pairs are disulfide-bonded: Cys-165–Cys-586 and Cys-349–Cys-383. 3 N-linked (GlcNAc...) asparagine glycosylation sites follow: Asn-282, Asn-295, and Asn-340. 2 N-linked (GlcNAc...) asparagine glycosylation sites follow: Asn-422 and Asn-444. The 136-residue stretch at Asn-431–Arg-566 folds into the Plastocyanin-like 3 domain. Positions 477, 480, 482, 548, 549, 550, and 554 each coordinate Cu cation. Residues Arg-607–Trp-619 constitute a propeptide that is removed on maturation.

It belongs to the multicopper oxidase family. Requires Cu cation as cofactor.

The protein resides in the secreted. It catalyses the reaction 4 hydroquinone + O2 = 4 benzosemiquinone + 2 H2O. Lignin degradation and detoxification of lignin-derived products. This is Laccase (lacc) from Neurospora crassa (strain ATCC 24698 / 74-OR23-1A / CBS 708.71 / DSM 1257 / FGSC 987).